A 349-amino-acid chain; its full sequence is Protein-glutamate methylesterase/protein-glutamine glutaminase 1 (349 aa).

The region spanning 2–119 (RTLIVDDSAF…DVNKAEKELV (118 aa)) is the Response regulatory domain. At D53 the chain carries 4-aspartylphosphate. The CheB-type methylesterase domain occupies 158–345 (ILIGSSTGGP…EEIVKRLEAK (188 aa)). Residues S163, H190, and D287 contribute to the active site.

It belongs to the CheB family. Post-translationally, phosphorylated by CheA. Phosphorylation of the N-terminal regulatory domain activates the methylesterase activity.

Its subcellular location is the cytoplasm. The enzyme catalyses [protein]-L-glutamate 5-O-methyl ester + H2O = L-glutamyl-[protein] + methanol + H(+). It carries out the reaction L-glutaminyl-[protein] + H2O = L-glutamyl-[protein] + NH4(+). In terms of biological role, involved in chemotaxis. Part of a chemotaxis signal transduction system that modulates chemotaxis in response to various stimuli. Catalyzes the demethylation of specific methylglutamate residues introduced into the chemoreceptors (methyl-accepting chemotaxis proteins or MCP) by CheR. Also mediates the irreversible deamidation of specific glutamine residues to glutamic acid. The protein is Protein-glutamate methylesterase/protein-glutamine glutaminase 1 of Methanosarcina acetivorans (strain ATCC 35395 / DSM 2834 / JCM 12185 / C2A).